A 122-amino-acid polypeptide reads, in one-letter code: Large ribosomal subunit protein uL14 (122 aa).

The protein belongs to the universal ribosomal protein uL14 family. In terms of assembly, part of the 50S ribosomal subunit. Forms a cluster with proteins L3 and L19. In the 70S ribosome, L14 and L19 interact and together make contacts with the 16S rRNA in bridges B5 and B8.

In terms of biological role, binds to 23S rRNA. Forms part of two intersubunit bridges in the 70S ribosome. The sequence is that of Large ribosomal subunit protein uL14 from Wolinella succinogenes (strain ATCC 29543 / DSM 1740 / CCUG 13145 / JCM 31913 / LMG 7466 / NCTC 11488 / FDC 602W) (Vibrio succinogenes).